Here is a 150-residue protein sequence, read N- to C-terminus: Protein A151R (150 aa).

It belongs to the asfivirus A151R family. Monomer. Homodimer. Interacts with protein B119L. Interacts with membrane protein E248R. Requires Zn(2+) as cofactor.

In terms of biological role, may participate in a redox cascade for the formation of disulfide bonds in viral proteins. This African swine fever virus (isolate Tick/Malawi/Lil 20-1/1983) (ASFV) protein is Protein A151R.